A 287-amino-acid polypeptide reads, in one-letter code: GPN-loop GTPase 3 (287 aa).

Residue 12–17 (GAGKST) coordinates GTP. A Gly-Pro-Asn (GPN)-loop; involved in dimer interface motif is present at residues 69–71 (GPN). 172 to 175 (SKMD) contributes to the GTP binding site.

Belongs to the GPN-loop GTPase family. As to quaternary structure, heterodimers with GPN1 or GPN2. Binds to RNA polymerase II (RNAPII).

Functionally, small GTPase required for proper nuclear import of RNA polymerase II and III (RNAPII and RNAPIII). May act at an RNAP assembly step prior to nuclear import. In Cryptococcus neoformans var. neoformans serotype D (strain B-3501A) (Filobasidiella neoformans), this protein is GPN-loop GTPase 3.